Reading from the N-terminus, the 239-residue chain is Ribonuclease PH (239 aa).

Residues Arg-86 and 124–126 (GTR) contribute to the phosphate site.

Belongs to the RNase PH family. As to quaternary structure, homohexameric ring arranged as a trimer of dimers.

It catalyses the reaction tRNA(n+1) + phosphate = tRNA(n) + a ribonucleoside 5'-diphosphate. In terms of biological role, phosphorolytic 3'-5' exoribonuclease that plays an important role in tRNA 3'-end maturation. Removes nucleotide residues following the 3'-CCA terminus of tRNAs; can also add nucleotides to the ends of RNA molecules by using nucleoside diphosphates as substrates, but this may not be physiologically important. Probably plays a role in initiation of 16S rRNA degradation (leading to ribosome degradation) during starvation. The sequence is that of Ribonuclease PH from Psychromonas ingrahamii (strain DSM 17664 / CCUG 51855 / 37).